Reading from the N-terminus, the 238-residue chain is Purine nucleoside phosphorylase DeoD-type (238 aa).

His4 is a binding site for a purine D-ribonucleoside. Residues Gly20, Arg24, Arg43, and 87 to 90 (RVGS) each bind phosphate. A purine D-ribonucleoside-binding positions include 179–181 (EME) and 203–204 (SD). The active-site Proton donor is Asp204.

This sequence belongs to the PNP/UDP phosphorylase family. As to quaternary structure, homohexamer; trimer of homodimers.

The catalysed reaction is a purine D-ribonucleoside + phosphate = a purine nucleobase + alpha-D-ribose 1-phosphate. It carries out the reaction a purine 2'-deoxy-D-ribonucleoside + phosphate = a purine nucleobase + 2-deoxy-alpha-D-ribose 1-phosphate. Its function is as follows. Catalyzes the reversible phosphorolytic breakdown of the N-glycosidic bond in the beta-(deoxy)ribonucleoside molecules, with the formation of the corresponding free purine bases and pentose-1-phosphate. The protein is Purine nucleoside phosphorylase DeoD-type of Haemophilus ducreyi (strain 35000HP / ATCC 700724).